A 444-amino-acid chain; its full sequence is Cysteine proteinase 2 (444 aa).

The segment at residues 1–19 (MATSRAALCAVAVVCVVLA) is a signal peptide (or 27). The propeptide at 20–124 (AACAPARAIH…HYRKARADLS (105 aa)) is activation peptide. Cysteines 147 and 188 form a disulfide. Cys150 is a catalytic residue. N-linked (GlcNAc...) asparagine glycosylation occurs at Asn228. Residues His289 and Asn309 contribute to the active site. Asn372 carries N-linked (GlcNAc...) asparagine glycosylation.

Belongs to the peptidase C1 family.

Its subcellular location is the lysosome. In terms of biological role, the cysteine proteinases have a potential role in host-parasite interaction and virulence. The polypeptide is Cysteine proteinase 2 (CYS2) (Leishmania pifanoi).